A 497-amino-acid chain; its full sequence is Replication factor C large subunit (497 aa).

ATP is bound at residue 50 to 57 (GPAGVGKT). Residues 428–455 (KRRSLGRDEGKAFFEKKPKKQTPDKKQM) are compositionally biased toward basic and acidic residues. A disordered region spans residues 428–497 (KRRSLGRDEG…AKPQKTLFDF (70 aa)). Residues 456–465 (DLTQIINSTP) are compositionally biased toward polar residues. The span at 466 to 476 (QEDKVEKKETE) shows a compositional bias: basic and acidic residues.

It belongs to the activator 1 small subunits family. RfcL subfamily. As to quaternary structure, heteromultimer composed of small subunits (RfcS) and large subunits (RfcL).

Part of the RFC clamp loader complex which loads the PCNA sliding clamp onto DNA. The sequence is that of Replication factor C large subunit from Methanococcoides burtonii (strain DSM 6242 / NBRC 107633 / OCM 468 / ACE-M).